An 897-amino-acid chain; its full sequence is 4-hydroxyphenylacetate decarboxylase glycyl radical subunit (897 aa).

In terms of domain architecture, PFL spans 35-770; the sequence is ESTQKLMDIY…VTLATADGRL (736 aa). Residues S344 and C503 each coordinate 4-hydroxyphenylacetate. The Cysteine radical intermediate role is filled by C503. The active-site Proton donor is the E505. The 4-hydroxyphenylacetate site is built by H536 and E637. The region spanning 778 to 897 is the Glycine radical domain; sequence GSVSAAAGTD…EVIYRTEYDK (120 aa). Position 873 is a glycine radical (G873).

This sequence belongs to the glycyl radical enzyme (GRE) family. HPAD subfamily. As to quaternary structure, heterooctamer consisting of 4 large (HpdB) subunits and 4 small (HpdC) subunits, arranged as a tetramer of heterodimers. Also forms a catalytically inactive homodimer. In terms of processing, requires the activating protein CsdA to generate the key active site glycyl radical that is involved in catalysis. Post-translationally, phosphorylated on serine. Phosphorylation may trigger the formation of the active heterooctamers and thereby regulates enzyme activity.

The catalysed reaction is 4-hydroxyphenylacetate + H(+) = 4-methylphenol + CO2. It catalyses the reaction 3,4-dihydroxyphenylacetate + H(+) = 4-methylcatechol + CO2. Its function is as follows. Glycyl radical subunit of the HPA decarboxylase that decarboxylates phenylacetates with a hydroxyl group in the p-position. Active toward 4-hydroxyphenylacetate and 3,4-dihydroxyphenylacetate, forming 4-methylphenol and 4-methylcatechol, respectively. Is likely involved in the catabolism of aromatic amino acids such as tyrosine fermentation. 4-methylphenol (p-cresol) formation provides metabolic toxicity, which allows an active suppression of other microbes and may provide growth advantages for the producers in highly competitive environments. The large subunit is the catalytic subunit that binds the substrate. The sequence is that of 4-hydroxyphenylacetate decarboxylase glycyl radical subunit from Clostridium scatologenes.